A 546-amino-acid polypeptide reads, in one-letter code: Carboxylic ester hydrolase FVEG_12634 (546 aa).

Residues 72 to 91 (FTDGTKICPQPPSSNTPDPS) are disordered. The active-site Acyl-ester intermediate is the S214.

Belongs to the type-B carboxylesterase/lipase family.

It catalyses the reaction a carboxylic ester + H2O = an alcohol + a carboxylate + H(+). Functionally, carboxylic ester hydrolase; part of the Fusarium detoxification of benzoxazolinone cluster 2 (FDB2) involved in the degradation of benzoxazolinones produced by the host plant. Maize, wheat, and rye produce the 2 benzoxazinone phytoanticipins 2,4-dihy-droxy-7-methoxy-1,4-benzoxazin-3-one (DIMBOA) and 2,4-dihydroxy-1,4-benzoxazin-3-one (DIBOA) that, due to their inherent instability once released, spontaneously degrade to the more stable corresponding benzoxazolinones, 6-methoxy-2-benzoxazolinone (MBOA) and 2-benzoxazolinone (BOA), respectively. The first step in the detoxification of benzoxazolinones involves the hydrolysis of the cyclic ester bond of benzoxazolinones by the FDB1 cluster gamma-lactamase MBL1 to aminophenols. MBL1 is able to convert BOA into 2-aminophenol (2-AP), as well as MBOA into 5-methoxy-2-aminophenol (2-AMP). The FDB2 cluster N-malonyltransferase FDB2/NAT1 then metabolizes aminophenols via N-malonylation to non-toxic malonamic acids. FDB2/NAT1 converts 2-AP into N-(2-hydroxyphenyl) malonamic acid (HPMA) and 2-AMP into N-(2-hydroxy-4-methoxyphenyl) malonamic acid (HMPMA). The duplicated dienlactone hydrolases DLH1 and DLH2 may provide redundant function for hydrolyzing the lactone moiety in the BOA molecule. The roles of the amidases an other enzymes encoded by the 2 FDB clusters have not been identified so far. This Gibberella moniliformis (strain M3125 / FGSC 7600) (Maize ear and stalk rot fungus) protein is Carboxylic ester hydrolase FVEG_12634.